The chain runs to 794 residues: Phenylalanine--tRNA ligase beta subunit (794 aa).

A tRNA-binding domain is found at 39–154 (SSSFSSIITA…ANTPLGESAC (116 aa)). The B5 domain occupies 403 to 481 (PPSPTLTLRT…QPWKIEKKKA (79 aa)). Mg(2+) is bound by residues D457, D463, E466, and E467. The FDX-ACB domain maps to 697 to 793 (PIYPSSFRDI…QLDDTKGTID (97 aa)).

The protein belongs to the phenylalanyl-tRNA synthetase beta subunit family. Type 1 subfamily. Tetramer of two alpha and two beta subunits. The cofactor is Mg(2+).

It localises to the cytoplasm. It catalyses the reaction tRNA(Phe) + L-phenylalanine + ATP = L-phenylalanyl-tRNA(Phe) + AMP + diphosphate + H(+). In Chlamydia abortus (strain DSM 27085 / S26/3) (Chlamydophila abortus), this protein is Phenylalanine--tRNA ligase beta subunit.